Here is a 149-residue protein sequence, read N- to C-terminus: Chromophore lyase CpcS/CpeS homolog (149 aa).

It belongs to the CpcS/CpeS biliprotein lyase family.

It localises to the plastid. The protein resides in the chloroplast. Functionally, might function to covalently attach a chromophore to Cys residue(s) of phycobiliproteins. The sequence is that of Chromophore lyase CpcS/CpeS homolog from Porphyra purpurea (Red seaweed).